The primary structure comprises 457 residues: Chromosomal replication initiator protein DnaA (457 aa).

The interval 1–77 (MDTNNNIEKE…EILSQNKVGM (77 aa)) is domain I, interacts with DnaA modulators. A domain II region spans residues 77-108 (MHLAHSVDVRIEVAPKIQVNAQSNINYKATKT). Residues 109 to 323 (SVKDSYTFEN…GAIIKISVNA (215 aa)) are domain III, AAA+ region. Gly153, Gly155, Lys156, and Thr157 together coordinate ATP. The tract at residues 324–457 (NLMNATIDLN…DKKTAFNSSE (134 aa)) is domain IV, binds dsDNA.

The protein belongs to the DnaA family. Oligomerizes as a right-handed, spiral filament on DNA at oriC.

The protein localises to the cytoplasm. In terms of biological role, plays an essential role in the initiation and regulation of chromosomal replication. ATP-DnaA binds to the origin of replication (oriC) to initiate formation of the DNA replication initiation complex once per cell cycle. Binds the DnaA box (a 9 base pair repeat at the origin) and separates the double-stranded (ds)DNA. Forms a right-handed helical filament on oriC DNA; dsDNA binds to the exterior of the filament while single-stranded (ss)DNA is stabiized in the filament's interior. The ATP-DnaA-oriC complex binds and stabilizes one strand of the AT-rich DNA unwinding element (DUE), permitting loading of DNA polymerase. After initiation quickly degrades to an ADP-DnaA complex that is not apt for DNA replication. Binds acidic phospholipids. The protein is Chromosomal replication initiator protein DnaA of Helicobacter pylori (strain J99 / ATCC 700824) (Campylobacter pylori J99).